The sequence spans 613 residues: MSDPQTSMAATAAVSPSDYLQPAASTTQDSQPSPLALLAATCSKIGPPAVEAAVTPPAPPQPTPRKLVPIKPAPLPLSPGKNSFGILSSKGNILQIQGSQLSASYPGGQLVFAIQNPTMINKGTRSNANIQYQAVPQIQASNSQTIQVQPNLTNQIQIIPGTNQAIITPSPSSHKPVPIKPAPIQKSSTTTTPVQSGANVVKLTGGGGNVTLTLPVNNLVNASDTGAPTQLLTESPPTPLSKTNKKARKKSLPASQPPVAVAEQVETVLIETTADNIIQAGNNLLIVQSPGGGQPAVVQQVQVVPPKAEQQQVVQIPQQALRVVQAASATLPTVPQKPSQNFQIQAAEPTPTQVYIRTPSGEVQTVLVQDSPPATAAATSNTTCSSPASRAPHLSGTSKKHSAAILRKERPLPKIAPAGSIISLNAAQLAAAAQAMQTININGVQVQGVPVTITNTGGQQQLTVQNVSGNNLTISGLSPTQIQLQMEQALAGETQPGEKRRRMACTCPNCKDGEKRSGEQGKKKHVCHIPDCGKTFRKTSLLRAHVRLHTGERPFVCNWFFCGKRFTRSDELQRHARTHTGDKRFECAQCQKRFMRSDHLTKHYKTHLVTKNL.

Positions 1 to 32 (MSDPQTSMAATAAVSPSDYLQPAASTTQDSQP) are disordered. Residues 23–32 (AASTTQDSQP) show a composition bias toward polar residues. Serine 78 carries the post-translational modification Phosphoserine. The segment covering 225–235 (TGAPTQLLTES) has biased composition (polar residues). Residues 225-258 (TGAPTQLLTESPPTPLSKTNKKARKKSLPASQPP) are disordered. Residues 361–369 (GEVQTVLVQ) carry the 9aaTAD; inactive motif. Low complexity predominate over residues 372–389 (PPATAAATSNTTCSSPAS). Residues 372-404 (PPATAAATSNTTCSSPASRAPHLSGTSKKHSAA) form a disordered region. 3 C2H2-type zinc fingers span residues 525–549 (HVCHIPDCGKTFRKTSLLRAHVRLH), 555–579 (FVCNWFFCGKRFTRSDELQRHARTH), and 585–607 (FECAQCQKRFMRSDHLTKHYKTH).

Belongs to the Sp1 C2H2-type zinc-finger protein family.

It localises to the nucleus. Functionally, binds to GC box promoters elements and selectively activates mRNA synthesis from genes that contain functional recognition sites. The polypeptide is Transcription factor Sp2 (SP2) (Homo sapiens (Human)).